A 376-amino-acid polypeptide reads, in one-letter code: Fructose-1,6-bisphosphate aldolase/phosphatase (376 aa).

Aspartate 11 acts as the Proton acceptor; for FBP phosphatase activity in catalysis. Residues aspartate 11, histidine 18, aspartate 49, and aspartate 50 each contribute to the Mg(2+) site. Residue histidine 18 coordinates beta-D-fructose 1,6-bisphosphate. Dihydroxyacetone phosphate is bound at residue histidine 18. Tyrosine 87 contacts beta-D-fructose 1,6-bisphosphate. Glutamine 91 contributes to the Mg(2+) binding site. Residue 100 to 101 (GN) participates in beta-D-fructose 1,6-bisphosphate binding. Aspartate 128 is a Mg(2+) binding site. Residue lysine 129 participates in beta-D-fructose 1,6-bisphosphate binding. Lysine 129 provides a ligand contact to dihydroxyacetone phosphate. Residue tyrosine 224 is the Proton donor/acceptor; for FBP aldolase activity of the active site. Lysine 227, aspartate 228, and aspartate 229 together coordinate Mg(2+). The active-site Schiff-base intermediate with DHAP; for FBP aldolase activity is lysine 227. Beta-D-fructose 1,6-bisphosphate contacts are provided by residues 237 to 238 (QK), arginine 261, and tyrosine 342. Residue arginine 261 participates in dihydroxyacetone phosphate binding. Residues 357-376 (MVPLKDSGPAGTGRAYEDPD) are disordered.

This sequence belongs to the FBP aldolase/phosphatase family. In terms of assembly, homooctamer; dimer of tetramers. Mg(2+) is required as a cofactor.

It catalyses the reaction beta-D-fructose 1,6-bisphosphate + H2O = beta-D-fructose 6-phosphate + phosphate. The catalysed reaction is beta-D-fructose 1,6-bisphosphate = D-glyceraldehyde 3-phosphate + dihydroxyacetone phosphate. The protein operates within carbohydrate biosynthesis; gluconeogenesis. Its function is as follows. Catalyzes two subsequent steps in gluconeogenesis: the aldol condensation of dihydroxyacetone phosphate (DHAP) and glyceraldehyde-3-phosphate (GA3P) to fructose-1,6-bisphosphate (FBP), and the dephosphorylation of FBP to fructose-6-phosphate (F6P). This chain is Fructose-1,6-bisphosphate aldolase/phosphatase, found in Cenarchaeum symbiosum (strain A).